Consider the following 255-residue polypeptide: MFNLFPPFGANTAIFNDAPQPWQVGFQDGASPTQEGITELHDSIFFYLVIICFGVLWVLSSVIVNFNSNKSQLVYKYANHGTLIELIWTITPALVLIAIAFPSFKLLYLMDEVISPSMTVKVAGHQWYWSAEYSDFINEDGESIEFDSYMVPETDLEDGQLRLLEVDNRMVVPIDTHIRFIVTGADVIHDFAVPSLGLKIDAVPGRLNQTSVLIEREGVFYGQCSEICGVYHGFMPIAIEAVTPEKYLAWIDSQA.

The N-terminal stretch at 1–16 (MFNLFPPFGANTAIFN) is a signal peptide. Over 17–43 (DAPQPWQVGFQDGASPTQEGITELHDS) the chain is Mitochondrial intermembrane. A helical membrane pass occupies residues 44-64 (IFFYLVIICFGVLWVLSSVIV). Over 65–80 (NFNSNKSQLVYKYANH) the chain is Mitochondrial matrix. A helical membrane pass occupies residues 81 to 101 (GTLIELIWTITPALVLIAIAF). Residues 102–255 (PSFKLLYLMD…KYLAWIDSQA (154 aa)) are Mitochondrial intermembrane-facing. Cu cation-binding residues include H189, C224, E226, C228, H232, and M235. E226 contributes to the Mg(2+) binding site.

It belongs to the cytochrome c oxidase subunit 2 family. In terms of assembly, component of the cytochrome c oxidase (complex IV, CIV), a multisubunit enzyme composed of a catalytic core of 3 subunits and several supernumerary subunits. The complex exists as a monomer or a dimer and forms supercomplexes (SCs) in the inner mitochondrial membrane with ubiquinol-cytochrome c oxidoreductase (cytochrome b-c1 complex, complex III, CIII). The cofactor is Cu cation.

Its subcellular location is the mitochondrion inner membrane. It carries out the reaction 4 Fe(II)-[cytochrome c] + O2 + 8 H(+)(in) = 4 Fe(III)-[cytochrome c] + 2 H2O + 4 H(+)(out). In terms of biological role, component of the cytochrome c oxidase, the last enzyme in the mitochondrial electron transport chain which drives oxidative phosphorylation. The respiratory chain contains 3 multisubunit complexes succinate dehydrogenase (complex II, CII), ubiquinol-cytochrome c oxidoreductase (cytochrome b-c1 complex, complex III, CIII) and cytochrome c oxidase (complex IV, CIV), that cooperate to transfer electrons derived from NADH and succinate to molecular oxygen, creating an electrochemical gradient over the inner membrane that drives transmembrane transport and the ATP synthase. Cytochrome c oxidase is the component of the respiratory chain that catalyzes the reduction of oxygen to water. Electrons originating from reduced cytochrome c in the intermembrane space (IMS) are transferred via the dinuclear copper A center (CU(A)) of subunit 2 and heme A of subunit 1 to the active site in subunit 1, a binuclear center (BNC) formed by heme A3 and copper B (CU(B)). The BNC reduces molecular oxygen to 2 water molecules using 4 electrons from cytochrome c in the IMS and 4 protons from the mitochondrial matrix. The protein is Cytochrome c oxidase subunit 2 (COX2) of Mycosarcoma maydis (Corn smut fungus).